Reading from the N-terminus, the 114-residue chain is MAFNPIAPVHPLMLQQNLNPIQENNPVEGSGPQTPAGAAKVGADFGQFLQEALQKVDNLQKEADVASLGLATGQIQDLHTAVIAMEKAGLSLSLTVDVRNRALDAYHEIMRMQI.

This sequence belongs to the FliE family.

Its subcellular location is the bacterial flagellum basal body. The sequence is that of Flagellar hook-basal body complex protein FliE from Desulfitobacterium hafniense (strain DSM 10664 / DCB-2).